The primary structure comprises 456 residues: Bifunctional protein GlmU (456 aa).

The pyrophosphorylase stretch occupies residues 1–229; sequence MLNNAMSVVI…LSEVEGVNNR (229 aa). UDP-N-acetyl-alpha-D-glucosamine contacts are provided by residues 11–14, Lys-25, Gln-76, 81–82, 103–105, Gly-140, Glu-154, Asn-169, and Asn-227; these read LAAG, GT, and YGD. Asp-105 provides a ligand contact to Mg(2+). Position 227 (Asn-227) interacts with Mg(2+). The linker stretch occupies residues 230–250; that stretch reads LQLSRLERVYQSEQAEKLLLA. The interval 251–456 is N-acetyltransferase; sequence GVMLRDPARF…EGWRRPVKKK (206 aa). Arg-333 and Lys-351 together coordinate UDP-N-acetyl-alpha-D-glucosamine. His-363 (proton acceptor) is an active-site residue. The UDP-N-acetyl-alpha-D-glucosamine site is built by Tyr-366 and Asn-377. Residues Ala-380, 386-387, Ser-405, Ala-423, and Arg-440 contribute to the acetyl-CoA site; that span reads NY.

In the N-terminal section; belongs to the N-acetylglucosamine-1-phosphate uridyltransferase family. This sequence in the C-terminal section; belongs to the transferase hexapeptide repeat family. As to quaternary structure, homotrimer. Mg(2+) serves as cofactor.

Its subcellular location is the cytoplasm. It catalyses the reaction alpha-D-glucosamine 1-phosphate + acetyl-CoA = N-acetyl-alpha-D-glucosamine 1-phosphate + CoA + H(+). The catalysed reaction is N-acetyl-alpha-D-glucosamine 1-phosphate + UTP + H(+) = UDP-N-acetyl-alpha-D-glucosamine + diphosphate. Its pathway is nucleotide-sugar biosynthesis; UDP-N-acetyl-alpha-D-glucosamine biosynthesis; N-acetyl-alpha-D-glucosamine 1-phosphate from alpha-D-glucosamine 6-phosphate (route II): step 2/2. The protein operates within nucleotide-sugar biosynthesis; UDP-N-acetyl-alpha-D-glucosamine biosynthesis; UDP-N-acetyl-alpha-D-glucosamine from N-acetyl-alpha-D-glucosamine 1-phosphate: step 1/1. It participates in bacterial outer membrane biogenesis; LPS lipid A biosynthesis. Functionally, catalyzes the last two sequential reactions in the de novo biosynthetic pathway for UDP-N-acetylglucosamine (UDP-GlcNAc). The C-terminal domain catalyzes the transfer of acetyl group from acetyl coenzyme A to glucosamine-1-phosphate (GlcN-1-P) to produce N-acetylglucosamine-1-phosphate (GlcNAc-1-P), which is converted into UDP-GlcNAc by the transfer of uridine 5-monophosphate (from uridine 5-triphosphate), a reaction catalyzed by the N-terminal domain. This chain is Bifunctional protein GlmU, found in Shigella boydii serotype 4 (strain Sb227).